Consider the following 609-residue polypeptide: Glutamine--fructose-6-phosphate aminotransferase [isomerizing] (609 aa).

C2 (nucleophile; for GATase activity) is an active-site residue. The Glutamine amidotransferase type-2 domain maps to 2–218; sequence CGIVGAIAQR…EGDIAEITRR (217 aa). SIS domains lie at 286 to 426 and 458 to 599; these read ADEL…LKGL and LAED…VDQP. Residue K604 is the For Fru-6P isomerization activity of the active site.

Homodimer.

The protein resides in the cytoplasm. The catalysed reaction is D-fructose 6-phosphate + L-glutamine = D-glucosamine 6-phosphate + L-glutamate. Catalyzes the first step in hexosamine metabolism, converting fructose-6P into glucosamine-6P using glutamine as a nitrogen source. This Salmonella typhimurium (strain LT2 / SGSC1412 / ATCC 700720) protein is Glutamine--fructose-6-phosphate aminotransferase [isomerizing].